We begin with the raw amino-acid sequence, 221 residues long: NADH-ubiquinone oxidoreductase chain 4 (221 aa).

5 consecutive transmembrane segments (helical) span residues 20–40, 45–65, 78–98, 121–141, and 170–190; these read ALIA…LLTM, LTGS…LFCL, LLIN…WFLL, IVSW…FSAA, and FLLL…SNFC.

It belongs to the complex I subunit 4 family.

Its subcellular location is the mitochondrion membrane. The enzyme catalyses a ubiquinone + NADH + 5 H(+)(in) = a ubiquinol + NAD(+) + 4 H(+)(out). Functionally, core subunit of the mitochondrial membrane respiratory chain NADH dehydrogenase (Complex I) that is believed to belong to the minimal assembly required for catalysis. Complex I functions in the transfer of electrons from NADH to the respiratory chain. The immediate electron acceptor for the enzyme is believed to be ubiquinone. The sequence is that of NADH-ubiquinone oxidoreductase chain 4 (ND4) from Anopheles arabiensis (Mosquito).